The chain runs to 393 residues: NAD(P)H-quinone oxidoreductase subunit H, chloroplastic (393 aa).

Belongs to the complex I 49 kDa subunit family. NDH is composed of at least 16 different subunits, 5 of which are encoded in the nucleus.

The protein localises to the plastid. It localises to the chloroplast thylakoid membrane. It carries out the reaction a plastoquinone + NADH + (n+1) H(+)(in) = a plastoquinol + NAD(+) + n H(+)(out). The catalysed reaction is a plastoquinone + NADPH + (n+1) H(+)(in) = a plastoquinol + NADP(+) + n H(+)(out). NDH shuttles electrons from NAD(P)H:plastoquinone, via FMN and iron-sulfur (Fe-S) centers, to quinones in the photosynthetic chain and possibly in a chloroplast respiratory chain. The immediate electron acceptor for the enzyme in this species is believed to be plastoquinone. Couples the redox reaction to proton translocation, and thus conserves the redox energy in a proton gradient. This chain is NAD(P)H-quinone oxidoreductase subunit H, chloroplastic, found in Solanum bulbocastanum (Wild potato).